Here is a 142-residue protein sequence, read N- to C-terminus: Prefoldin subunit alpha 2 (142 aa).

The protein belongs to the prefoldin subunit alpha family. In terms of assembly, heterohexamer of two alpha and four beta subunits.

It localises to the cytoplasm. Molecular chaperone capable of stabilizing a range of proteins. Seems to fulfill an ATP-independent, HSP70-like function in archaeal de novo protein folding. This chain is Prefoldin subunit alpha 2, found in Thermococcus kodakarensis (strain ATCC BAA-918 / JCM 12380 / KOD1) (Pyrococcus kodakaraensis (strain KOD1)).